Consider the following 267-residue polypeptide: Adenosine 5'-phosphosulfate reductase (267 aa).

The tract at residues 1–29 (MPPFATIPATERNSAAQHQDPSPMSQPFD) is disordered. Polar residues predominate over residues 11–25 (ERNSAAQHQDPSPMS). [4Fe-4S] cluster-binding residues include C139, C140, C228, and C231. C256 serves as the catalytic Nucleophile; cysteine thiosulfonate intermediate.

This sequence belongs to the PAPS reductase family. CysH subfamily. [4Fe-4S] cluster serves as cofactor.

It localises to the cytoplasm. The catalysed reaction is [thioredoxin]-disulfide + sulfite + AMP + 2 H(+) = adenosine 5'-phosphosulfate + [thioredoxin]-dithiol. It functions in the pathway sulfur metabolism; hydrogen sulfide biosynthesis; sulfite from sulfate. In terms of biological role, catalyzes the formation of sulfite from adenosine 5'-phosphosulfate (APS) using thioredoxin as an electron donor. The chain is Adenosine 5'-phosphosulfate reductase from Pseudomonas aeruginosa (strain LESB58).